The sequence spans 196 residues: Ribosomal RNA large subunit methyltransferase E (196 aa).

S-adenosyl-L-methionine contacts are provided by G52, W54, D72, D88, and D111. K151 serves as the catalytic Proton acceptor.

This sequence belongs to the class I-like SAM-binding methyltransferase superfamily. RNA methyltransferase RlmE family.

The protein localises to the cytoplasm. It catalyses the reaction uridine(2552) in 23S rRNA + S-adenosyl-L-methionine = 2'-O-methyluridine(2552) in 23S rRNA + S-adenosyl-L-homocysteine + H(+). In terms of biological role, specifically methylates the uridine in position 2552 of 23S rRNA at the 2'-O position of the ribose in the fully assembled 50S ribosomal subunit. The polypeptide is Ribosomal RNA large subunit methyltransferase E (Cenarchaeum symbiosum (strain A)).